We begin with the raw amino-acid sequence, 505 residues long: Metal transporter Nramp3.2 (505 aa).

The next 12 membrane-spanning stretches (helical) occupy residues 50–70 (LWLF…PGNL), 78–98 (AIAG…GLLV), 127–147 (MVLW…EVIG), 159–179 (FVPL…FLFL), 187–207 (LEAV…WMFA), 233–253 (AVGV…SALV), 280–300 (ALVI…KGFY), 321–341 (YGGG…AAGQ), 369–389 (ALIT…VFDT), 400–420 (WLNV…LCLV), 439–459 (AWLV…DFFF), and 466–486 (AFTT…IYLI).

This sequence belongs to the NRAMP (TC 2.A.55) family. As to expression, expressed in roots, stems, buds and leaves.

It localises to the vacuole membrane. The catalysed reaction is Mn(2+)(in) = Mn(2+)(out). The enzyme catalyses Fe(2+)(in) = Fe(2+)(out). In terms of biological role, divalent metal transporter. Can transport manganese (Mn) and iron (Fe). Involved in the release of metals stored in the vacuole. This is Metal transporter Nramp3.2 from Populus trichocarpa (Western balsam poplar).